The primary structure comprises 621 residues: UvrABC system protein C (621 aa).

In terms of domain architecture, GIY-YIG spans 20 to 98 (MAPGVYCMYA…IKSLAPRYNV (79 aa)). Residues 207-242 (DLLAEELIQAMQVASEHLEFEQAARLRDLLTSLRSM) form the UVR domain.

This sequence belongs to the UvrC family. In terms of assembly, interacts with UvrB in an incision complex.

The protein localises to the cytoplasm. In terms of biological role, the UvrABC repair system catalyzes the recognition and processing of DNA lesions. UvrC both incises the 5' and 3' sides of the lesion. The N-terminal half is responsible for the 3' incision and the C-terminal half is responsible for the 5' incision. The chain is UvrABC system protein C from Xylella fastidiosa (strain 9a5c).